Consider the following 493-residue polypeptide: Transcript termination protein A18 (493 aa).

Residues 100 to 256 (MIESKRPLYI…NSIINIAKLS (157 aa)) form the Helicase ATP-binding domain. 113–120 (LACGFGKT) serves as a coordination point for ATP. Residues 206 to 209 (DESH) carry the DESH box motif.

The protein belongs to the helicase family. Poxviruses subfamily. In terms of assembly, interacts with G2. Might be part of a transcription complex composed at least of G2, A18, and H5.

It is found in the virion. In terms of biological role, DNA helicase which seems to act as a postreplicative transcription termination factor. Involved in ATP-dependent release of nascent RNA. Forms a stable complex with single-stranded DNA, and to a lesser extent RNA. The chain is Transcript termination protein A18 from Vaccinia virus (strain Tian Tan) (VACV).